Reading from the N-terminus, the 311-residue chain is Triacylglycerol lipase (311 aa).

A signal peptide spans 1–26 (MKKKSLLPLGLAIGLASLAASPLIQA). The region spanning 35-280 (PIVLAHGMLG…DNYRMNHLDE (246 aa)) is the AB hydrolase-1 domain. Met42 provides a ligand contact to substrate. Residue Ser108 is the Nucleophile of the active site. His109 contacts substrate. The cysteines at positions 209 and 261 are disulfide-linked. Asp235 contributes to the Ca(2+) binding site. Active-site charge relay system residues include Asp255 and His277. Asp279, Gln283, and Leu287 together coordinate Ca(2+).

It belongs to the AB hydrolase superfamily. Pseudomonas lipase family. As to quaternary structure, monomer. Ca(2+) is required as a cofactor.

It is found in the secreted. It catalyses the reaction a triacylglycerol + H2O = a diacylglycerol + a fatty acid + H(+). Its activity is regulated as follows. Na(+) increases lipase activity. Inhibited by diethyl p-nitrophenyl phosphate and 3,4-dichloroisocoumarin (DCI). Its function is as follows. Catalyzes the hydrolysis of triacylglycerol. It also exhibits some esterase activity with p-nitrophenyl acetate and Tween 80 as substrates, however the lipase activity is approximately eight times the esterase activity. It shows a marked specificity for the 1,3-oleyl residues of triolein. This Pseudomonas aeruginosa (strain ATCC 15692 / DSM 22644 / CIP 104116 / JCM 14847 / LMG 12228 / 1C / PRS 101 / PAO1) protein is Triacylglycerol lipase.